A 361-amino-acid polypeptide reads, in one-letter code: Tyrosine--tRNA ligase (361 aa).

Residues Tyr-36, Tyr-162, Gln-166, Asp-169, and Gln-184 each contribute to the L-tyrosine site. The 'KMSKS' region signature appears at Lys-236–Ser-240. Lys-239 lines the ATP pocket.

It belongs to the class-I aminoacyl-tRNA synthetase family. TyrS type 4 subfamily. As to quaternary structure, homodimer.

It localises to the cytoplasm. It catalyses the reaction tRNA(Tyr) + L-tyrosine + ATP = L-tyrosyl-tRNA(Tyr) + AMP + diphosphate + H(+). Functionally, catalyzes the attachment of tyrosine to tRNA(Tyr) in a two-step reaction: tyrosine is first activated by ATP to form Tyr-AMP and then transferred to the acceptor end of tRNA(Tyr). This Saccharolobus islandicus (strain M.14.25 / Kamchatka #1) (Sulfolobus islandicus) protein is Tyrosine--tRNA ligase.